We begin with the raw amino-acid sequence, 449 residues long: Probable secreted beta-glucosidase ARB_04747 (449 aa).

The N-terminal stretch at 1-21 (MKFSSGILSLAVAASVQSVQA) is a signal peptide. Asn57 carries N-linked (GlcNAc...) asparagine glycosylation. The tract at residues 96–185 (SPPACPAPSY…RPFPDGEIDC (90 aa)) is disordered. Over residues 98–125 (PACPAPSYVPSPPAAPSSPPAAPQPPSK) the composition is skewed to pro residues. Residues 131-150 (EEPKKPEEPKKPEGPKKPEG) are compositionally biased toward basic and acidic residues.

Belongs to the SUN family.

The protein resides in the secreted. It localises to the cell wall. In terms of biological role, cell surface beta-glucosidase involved in cytokinesis, cell wall biogenesis, adhesion to host tissue; thus playing an important role in the host-pathogen interaction. Has hydrolytic activity on linear (1-&gt;3)-beta-D-glucans such as laminaribiose and other laminarioligosaccharides. This chain is Probable secreted beta-glucosidase ARB_04747, found in Arthroderma benhamiae (strain ATCC MYA-4681 / CBS 112371) (Trichophyton mentagrophytes).